The chain runs to 288 residues: MMIDKLYKRVEKNGHVCAGLDTSLDYIPEYFKTKYFNEEDIIFNFNKEIIDATYDKVACFKIQIAYYEALGLKGLRAYKRTLDYIKESDGIVISDIKRGDISSTAKMYARAHFEGDFETDFITLSPYMGLDSIEPYFEYMKQKGKGVFVLVRTSNEGAKDIEFIESKDGNKVYEIIGKKLKNMGQDFLGNCGYSSIGGVVGCTHIDEAVKLRKDLGGMFFLIPGYGAQGGKAEDVALYLKNGNGGVVNSSRGILLAYKKQNDEKNFAKCSRNEVIRMRDDILQAINSK.

Catalysis depends on Lys97, which acts as the Proton donor.

The protein belongs to the OMP decarboxylase family. Type 2 subfamily.

The enzyme catalyses orotidine 5'-phosphate + H(+) = UMP + CO2. It functions in the pathway pyrimidine metabolism; UMP biosynthesis via de novo pathway; UMP from orotate: step 2/2. This Clostridium tetani (strain Massachusetts / E88) protein is Orotidine 5'-phosphate decarboxylase.